Consider the following 46-residue polypeptide: Major urinary protein (46 aa).

Asn-15 carries N-linked (GlcNAc...) asparagine glycosylation.

The protein belongs to the calycin superfamily. Lipocalin family. Found in many tissues including liver, urine, preputial gland, clitoral gland, submandibular gland and salivary gland.

Its subcellular location is the secreted. In terms of biological role, binds pheromones that are released from drying urine of males. These pheromones affect the sexual behavior of females. Acts as a shuttle for pheromonal communication between individuals of the same species. In Rattus rattus (Black rat), this protein is Major urinary protein.